The sequence spans 169 residues: Phosphopantetheine adenylyltransferase (169 aa).

Ser10 serves as a coordination point for substrate. ATP contacts are provided by residues 10 to 11 and His18; that span reads SF. Lys42, Leu74, and Arg88 together coordinate substrate. ATP-binding positions include 89–91, Glu99, and 124–130; these read GLR and YAFLSSS.

It belongs to the bacterial CoaD family. As to quaternary structure, homohexamer. Mg(2+) serves as cofactor.

Its subcellular location is the cytoplasm. The enzyme catalyses (R)-4'-phosphopantetheine + ATP + H(+) = 3'-dephospho-CoA + diphosphate. It participates in cofactor biosynthesis; coenzyme A biosynthesis; CoA from (R)-pantothenate: step 4/5. Functionally, reversibly transfers an adenylyl group from ATP to 4'-phosphopantetheine, yielding dephospho-CoA (dPCoA) and pyrophosphate. The chain is Phosphopantetheine adenylyltransferase from Geobacillus sp. (strain WCH70).